The following is a 310-amino-acid chain: Ribosomal RNA small subunit methyltransferase H (310 aa).

S-adenosyl-L-methionine is bound by residues 32 to 34, Asp-52, Phe-79, Asp-100, and Gln-107; that span reads GGH.

This sequence belongs to the methyltransferase superfamily. RsmH family.

The protein localises to the cytoplasm. It catalyses the reaction cytidine(1402) in 16S rRNA + S-adenosyl-L-methionine = N(4)-methylcytidine(1402) in 16S rRNA + S-adenosyl-L-homocysteine + H(+). In terms of biological role, specifically methylates the N4 position of cytidine in position 1402 (C1402) of 16S rRNA. The protein is Ribosomal RNA small subunit methyltransferase H of Bacillus cytotoxicus (strain DSM 22905 / CIP 110041 / 391-98 / NVH 391-98).